Reading from the N-terminus, the 142-residue chain is Large ribosomal subunit protein uL13 (142 aa).

The protein belongs to the universal ribosomal protein uL13 family. In terms of assembly, part of the 50S ribosomal subunit.

In terms of biological role, this protein is one of the early assembly proteins of the 50S ribosomal subunit, although it is not seen to bind rRNA by itself. It is important during the early stages of 50S assembly. This is Large ribosomal subunit protein uL13 from Leptothrix cholodnii (strain ATCC 51168 / LMG 8142 / SP-6) (Leptothrix discophora (strain SP-6)).